The chain runs to 338 residues: Ketol-acid reductoisomerase (NADP(+)) (338 aa).

Residues 1 to 181 (MQVYYDKDCD…GGGRTGIIET (181 aa)) enclose the KARI N-terminal Rossmann domain. NADP(+) contacts are provided by residues 24 to 27 (FGSQ), arginine 47, serine 50, serine 52, and 82 to 85 (DEFQ). Histidine 107 is a catalytic residue. Position 133 (glycine 133) interacts with NADP(+). One can recognise a KARI C-terminal knotted domain in the interval 182-327 (TFRDECETDL…RKLRAMMPWI (146 aa)). Aspartate 190, glutamate 194, glutamate 226, and glutamate 230 together coordinate Mg(2+). Serine 251 is a substrate binding site.

The protein belongs to the ketol-acid reductoisomerase family. Mg(2+) is required as a cofactor.

The catalysed reaction is (2R)-2,3-dihydroxy-3-methylbutanoate + NADP(+) = (2S)-2-acetolactate + NADPH + H(+). It carries out the reaction (2R,3R)-2,3-dihydroxy-3-methylpentanoate + NADP(+) = (S)-2-ethyl-2-hydroxy-3-oxobutanoate + NADPH + H(+). Its pathway is amino-acid biosynthesis; L-isoleucine biosynthesis; L-isoleucine from 2-oxobutanoate: step 2/4. The protein operates within amino-acid biosynthesis; L-valine biosynthesis; L-valine from pyruvate: step 2/4. In terms of biological role, involved in the biosynthesis of branched-chain amino acids (BCAA). Catalyzes an alkyl-migration followed by a ketol-acid reduction of (S)-2-acetolactate (S2AL) to yield (R)-2,3-dihydroxy-isovalerate. In the isomerase reaction, S2AL is rearranged via a Mg-dependent methyl migration to produce 3-hydroxy-3-methyl-2-ketobutyrate (HMKB). In the reductase reaction, this 2-ketoacid undergoes a metal-dependent reduction by NADPH to yield (R)-2,3-dihydroxy-isovalerate. This is Ketol-acid reductoisomerase (NADP(+)) from Hydrogenovibrio crunogenus (strain DSM 25203 / XCL-2) (Thiomicrospira crunogena).